A 2144-amino-acid polypeptide reads, in one-letter code: Alpha-protein kinase 2 (2144 aa).

The Ig-like 1 domain occupies 7 to 105; that stretch reads PERRTLCFLS…ICCSASLEVQ (99 aa). A disulfide bridge connects residues Cys33 and Cys98. Disordered stretches follow at residues 425–473, 500–575, 727–775, 845–864, 881–907, 1011–1065, 1316–1340, 1471–1509, 1565–1587, 1629–1696, and 1720–1754; these read ETAK…LQTM, SLAR…GAPG, EDNE…NVGS, QTQGSEPPRSTDKRSQDGKS, EASEDAVGETAADVENPPSTFSSTLPY, SCEA…PEGQ, DPVEDKELEVTDSPSEVSKTGEMEM, GPGEEGQGIPSVCSMSQTQDGGDRSLGEAGQRGTDETEV, CGNHVRSSDDLTNTPCTSSPKGN, ECES…GSGH, and ENSRKNSIVKKTPKFERSLSRTDEKRDPKRAPCKA. A compositionally biased stretch (basic and acidic residues) spans 500-511; the sequence is SLARERTDEKYP. The span at 853–864 shows a compositional bias: basic and acidic residues; it reads RSTDKRSQDGKS. Residues 897-906 show a composition bias toward polar residues; sequence PPSTFSSTLP. The segment covering 1574–1587 has biased composition (polar residues); it reads DLTNTPCTSSPKGN. Basic and acidic residues-rich tracts occupy residues 1631-1645 and 1732-1754; these read ESEKDPKSLLRRDPC and PKFERSLSRTDEKRDPKRAPCKA. In terms of domain architecture, Ig-like 2 spans 1759–1847; sequence PVLLKRIQAE…GKVTAEFNLT (89 aa). Cysteines 1781 and 1831 form a disulfide. One can recognise an Alpha-type protein kinase domain in the interval 1874 to 2106; that stretch reads KEDVFNDSYF…YCKMLGLKSL (233 aa). Positions 2109-2144 are disordered; sequence NSQKPKKPIVGKGRVPTNATQVKTPESETPPAERKT.

It belongs to the protein kinase superfamily. Alpha-type protein kinase family. ALPK subfamily.

The protein resides in the basolateral cell membrane. It catalyses the reaction L-seryl-[protein] + ATP = O-phospho-L-seryl-[protein] + ADP + H(+). It carries out the reaction L-threonyl-[protein] + ATP = O-phospho-L-threonyl-[protein] + ADP + H(+). Its function is as follows. Protein kinase that recognizes phosphorylation sites in which the surrounding peptides have an alpha-helical conformation. Regulates cardiac development and cardiomyocyte differentiation by negatively regulating Wnt/beta-catenin signaling. This Mus musculus (Mouse) protein is Alpha-protein kinase 2.